Here is a 91-residue protein sequence, read N- to C-terminus: Large ribosomal subunit protein uL23c (91 aa).

This sequence belongs to the universal ribosomal protein uL23 family. Part of the 50S ribosomal subunit.

Its subcellular location is the plastid. It is found in the chloroplast. Binds to 23S rRNA. This chain is Large ribosomal subunit protein uL23c (rpl23), found in Marchantia polymorpha (Common liverwort).